Reading from the N-terminus, the 549-residue chain is Carboxylesterase 1C (549 aa).

Positions methionine 1–glycine 18 are cleaved as a signal peptide. A glycan (N-linked (GlcNAc...) asparagine) is linked at asparagine 79. A disulfide bond links cysteine 87 and cysteine 116. Serine 221 functions as the Acyl-ester intermediate in the catalytic mechanism. Cysteines 273 and 284 form a disulfide. Residues asparagine 274, asparagine 275, and asparagine 302 are each glycosylated (N-linked (GlcNAc...) asparagine). Residue glutamate 340 is the Charge relay system of the active site. Asparagine 375 carries an N-linked (GlcNAc...) asparagine glycan. Histidine 453 serves as the catalytic Charge relay system. Serine 471 carries the post-translational modification Phosphoserine. Asparagine 476 is a glycosylation site (N-linked (GlcNAc...) asparagine). Residues threonine 546 to threonine 549 carry the Prevents secretion from ER motif.

Belongs to the type-B carboxylesterase/lipase family.

Its subcellular location is the endoplasmic reticulum lumen. It carries out the reaction a carboxylic ester + H2O = an alcohol + a carboxylate + H(+). Involved in the detoxification of xenobiotics and in the activation of ester and amide prodrugs. Involved in the extracellular metabolism of lung surfactant. This is Carboxylesterase 1C (Ces1c) from Rattus norvegicus (Rat).